Here is a 1165-residue protein sequence, read N- to C-terminus: Symplekin (1165 aa).

5 HEAT repeats span residues 23 to 58 (TATA…TVLG), 61 to 95 (AELA…QVCK), 98 to 140 (VELL…YLCS), 147 to 186 (SAEQ…GVVV), and 218 to 257 (KLQE…IAKM). A disordered region spans residues 365–384 (DQQQREMELDTEELERQKQK). Positions 367–384 (QQREMELDTEELERQKQK) are enriched in basic and acidic residues.

This sequence belongs to the Symplekin family. As to quaternary structure, interacts with Cpsf73 and Cpsf100 forming a core cleavage factor required for both polyadenylated and histone mRNA processing. Interacts with Slbp and Lsm11.

It localises to the nucleus. Functionally, component of a protein complex required for cotranscriptional processing of 3'-ends of polyadenylated and histone pre-mRNA. Involved in germline stem cell transit amplification, differentiation and mitosis-to-meiosis transition. The chain is Symplekin from Drosophila melanogaster (Fruit fly).